Consider the following 2492-residue polypeptide: Transcriptional regulator ATRX (2492 aa).

The segment at 1–146 (MTAEPMSESK…DKDDFKGPEF (146 aa)) is disordered. Lys10 participates in a covalent cross-link: Glycyl lysine isopeptide (Lys-Gly) (interchain with G-Cter in SUMO2). Residues 17–27 (KLHDFLAHSSE) show a composition bias toward basic and acidic residues. Ser25 and Ser34 each carry phosphoserine. The span at 40-57 (MNQNTDKISGSGSNSDMM) shows a compositional bias: polar residues. The segment covering 58–72 (ENSKEEGTSSSEKSK) has biased composition (basic and acidic residues). Tyr89 bears the Phosphotyrosine mark. Ser92 and Ser112 each carry phosphoserine. The segment covering 92–108 (SDDEKPLDDETVNEDAS) has biased composition (acidic residues). Over residues 135-146 (NEDKDDFKGPEF) the composition is skewed to basic and acidic residues. Glycyl lysine isopeptide (Lys-Gly) (interchain with G-Cter in SUMO2) cross-links involve residues Lys138 and Lys142. Positions 159–296 (KRGEDGLHGI…LEQLLQQNKK (138 aa)) constitute an ADD domain. The GATA-type; atypical zinc finger occupies 170-206 (SCTACGQQVNHFQKDSIYRHPSLQVLICKNCFKYYMS). Ser213 bears the Phosphoserine mark. A PHD-type; atypical zinc finger spans residues 217–272 (DEQCRWCAEGGNLICCDFCHNAFCKKCILRNLGRKELSTIMDENNQWYCYICHPEP). Lys299 is covalently cross-linked (Glycyl lysine isopeptide (Lys-Gly) (interchain with G-Cter in SUMO2)). Ser316 carries the phosphoserine modification. Lys438 participates in a covalent cross-link: Glycyl lysine isopeptide (Lys-Gly) (interchain with G-Cter in SUMO2). 2 stretches are compositionally biased toward basic and acidic residues: residues 457 to 473 (ISKS…DSEH) and 481 to 502 (EEQR…KEEP). The tract at residues 457–581 (ISKSEAKLSR…GGIKSKTTAK (125 aa)) is disordered. The span at 557-567 (ESSSVKLSISS) shows a compositional bias: low complexity. A PxVxL motif motif is present at residues 581–594 (KVTKELYVKLTPVS). Thr591 is modified (phosphothreonine). The interval 593–619 (VSLSNSPIKGADCQEVPQDKDGYKSCG) is disordered. Residues Ser594 and Ser598 each carry the phosphoserine modification. Residue Lys623 forms a Glycyl lysine isopeptide (Lys-Gly) (interchain with G-Cter in SUMO1); alternate linkage. Residue Lys623 forms a Glycyl lysine isopeptide (Lys-Gly) (interchain with G-Cter in SUMO2); alternate linkage. Ser634 carries the phosphoserine modification. The interval 652–949 (DLRRSPRVKT…AETKEKSKHL (298 aa)) is disordered. A Phosphothreonine modification is found at Thr674. A phosphoserine mark is found at Ser675, Ser677, Ser729, and Ser731. The span at 755-777 (NEIHTNHKTLYDLKTQAGKDDKG) shows a compositional bias: basic and acidic residues. 6 positions are modified to phosphoserine: Ser784, Ser819, Ser849, Ser850, Ser875, and Ser876. Positions 843–864 (NTKDFDSSEDEKHSKKGMDNQG) are enriched in basic and acidic residues. Residues 878–887 (DAERKQEREN) show a composition bias toward basic and acidic residues. A Phosphoserine modification is found at Ser889. Composition is skewed to basic and acidic residues over residues 894 to 909 (TVDK…DRLP) and 920 to 944 (GVDK…ETKE). Residue Ser962 is modified to Phosphoserine. Residue Lys967 is modified to N6-acetyllysine. Basic and acidic residues predominate over residues 967–1004 (KFLKKDQSDETSEDDKKQSKKGTEEKKKTSDFKKKVIK). The interval 967 to 1479 (KFLKKDQSDE…SKSPGKGRKK (513 aa)) is disordered. Residue Ser974 is modified to Phosphoserine. Thr977 carries the phosphothreonine modification. Lys1004 is covalently cross-linked (Glycyl lysine isopeptide (Lys-Gly) (interchain with G-Cter in SUMO2)). 3 positions are modified to phosphoserine: Ser1011, Ser1012, and Ser1013. The segment covering 1015 to 1027 (GTEKLPEREEICH) has biased composition (basic and acidic residues). Basic residues predominate over residues 1045–1055 (KNKKIRDKTSK). 2 stretches are compositionally biased toward basic and acidic residues: residues 1056–1082 (KKDE…DKKS) and 1103–1139 (KRQD…ERRN). Position 1061 is a phosphoserine (Ser1061). Residue Tyr1063 is modified to Phosphotyrosine. Residues 1167-1195 (KKKQRTSSKKKAVIVKEKKRNSLRTSTKR) show a composition bias toward basic residues. The segment at 1189–1326 (LRTSTKRKQA…KNQVNSESDS (138 aa)) is interaction with DAXX. Over residues 1233–1246 (LVLSSHTGFCQSSG) the composition is skewed to polar residues. Phosphoserine occurs at positions 1244, 1245, and 1253. Over residues 1267 to 1281 (PENRIAKKMLLEEIK) the composition is skewed to basic and acidic residues. The span at 1286–1297 (SDEDGSSDDEPE) shows a compositional bias: acidic residues. Residues 1298–1308 (EGKKRTGKQNE) are compositionally biased toward basic and acidic residues. Phosphoserine occurs at positions 1322, 1324, and 1326. Over residues 1334-1345 (PRYRHRLLRHKL) the composition is skewed to basic residues. Phosphoserine is present on residues Ser1348 and Ser1352. Basic and acidic residues-rich tracts occupy residues 1353-1368 (GEEK…EVKG) and 1408-1417 (KKAELEENQR). Over residues 1419 to 1428 (YKQKKKRRRI) the composition is skewed to basic residues. Residues 1443-1468 (EEEEEEKEEEEEEEEEEEEEEEDEND) are compositionally biased toward acidic residues. Residue Lys1488 forms a Glycyl lysine isopeptide (Lys-Gly) (interchain with G-Cter in SUMO2) linkage. Ser1527 bears the Phosphoserine mark. Residue Thr1529 is modified to Phosphothreonine. Residues 1581-1768 (KTKKSPGSGC…HCMVNFIKEN (188 aa)) form the Helicase ATP-binding domain. Residue 1594-1601 (HCMGLGKT) coordinates ATP. Residues 1719-1722 (DEGH) carry the DEGH box motif. Ser1906 and Ser1913 each carry phosphoserine. Residues 1913-2000 (SDSDETSMSL…SSNPSSPAPD (88 aa)) form a disordered region. A compositionally biased stretch (basic residues) spans 1929 to 1938 (KKKKKGKKGK). Residue Lys1982 forms a Glycyl lysine isopeptide (Lys-Gly) (interchain with G-Cter in SUMO1); alternate linkage. Lys1982 is covalently cross-linked (Glycyl lysine isopeptide (Lys-Gly) (interchain with G-Cter in SUMO2); alternate). Residue Lys1987 forms a Glycyl lysine isopeptide (Lys-Gly) (interchain with G-Cter in SUMO2) linkage. Positions 1990–1999 (SSSNPSSPAP) are enriched in low complexity. A phosphoserine mark is found at Ser1992 and Ser1996. An interaction with MECP2 region spans residues 2010–2280 (DAEVLEHSGK…RKAAWAEYEA (271 aa)). Residues 2025 to 2205 (EILRMAEEIG…ERHFTMNELT (181 aa)) form the Helicase C-terminal domain. The residue at position 2220 (Ser2220) is a Phosphoserine. The segment at 2462–2492 (PVAGGMQPPPLQRAPPPMRSKNPGPSQGKSM) is disordered. Positions 2468 to 2479 (QPPPLQRAPPPM) are enriched in pro residues. 2 positions are modified to omega-N-methylarginine: Arg2474 and Arg2480.

Belongs to the SNF2/RAD54 helicase family. In terms of assembly, interacts with DAXX to form the chromatin remodeling complex ATRX:DAXX. Probably binds EZH2. Binds annexin V in a calcium and phosphatidylcholine/phosphatidylserine-dependent manner. Interacts directly with CBX5 via the PxVxL motif. Interacts with RAD50, MRE11 and NBN; indicative for an association with the MRN complex. Interacts with histone MACROH2A1. Interacts with histone H3 peptides methylated at 'Lys-10' with preferences H3K9me3 &gt; H3K9me2 &gt; H3K9me1. Interacts with histone H3 peptides unmethylated at 'Lys-5' (H3K4me0). Interacts with MECP2, SMC1 and SMC3. Interacts with SETDB1, TRIM28 and ZNF274.

It localises to the nucleus. The protein resides in the chromosome. It is found in the telomere. Its subcellular location is the PML body. It catalyses the reaction ATP + H2O = ADP + phosphate + H(+). In terms of biological role, involved in transcriptional regulation and chromatin remodeling. Facilitates DNA replication in multiple cellular environments and is required for efficient replication of a subset of genomic loci. Binds to DNA tandem repeat sequences in both telomeres and euchromatin and in vitro binds DNA quadruplex structures. May help stabilizing G-rich regions into regular chromatin structures by remodeling G4 DNA and incorporating H3.3-containing nucleosomes. Catalytic component of the chromatin remodeling complex ATRX:DAXX which has ATP-dependent DNA translocase activity and catalyzes the replication-independent deposition of histone H3.3 in pericentric DNA repeats outside S-phase and telomeres, and the in vitro remodeling of H3.3-containing nucleosomes. Its heterochromatin targeting is proposed to involve a combinatorial readout of histone H3 modifications (specifically methylation states of H3K9 and H3K4) and association with CBX5. Involved in maintaining telomere structural integrity in embryonic stem cells which probably implies recruitment of CBX5 to telomeres. May be involved in transcriptional regulation of telomeric repeat-containing RNA (TERRA). Acts as a negative regulator of chromatin incorporation of transcriptionally repressive histone MACROH2A1, particularily at telomeres. Participates in the allele-specific gene expression at the imprinted IGF2/H19 gene locus. On the maternal allele, required for the chromatin occupancy of SMC1 and CTCTF within the H19 imprinting control region (ICR) and involved in esatblishment of histone tails modifications in the ICR. May be involved in brain development and facial morphogenesis. Binds to zinc-finger coding genes with atypical chromatin signatures and regulates its H3K9me3 levels. Forms a complex with ZNF274, TRIM28 and SETDB1 to facilitate the deposition and maintenance of H3K9me3 at the 3' exons of zinc-finger genes. In Pongo pygmaeus (Bornean orangutan), this protein is Transcriptional regulator ATRX (ATRX).